Reading from the N-terminus, the 231-residue chain is NADH-ubiquinone oxidoreductase chain 4 (231 aa).

6 consecutive transmembrane segments (helical) span residues 1–21, 34–54, 62–84, 89–111, 128–148, and 169–189; these read PIAG…YGII, MFLP…LTCL, LIAY…QTPW, AMAL…NTTY, ILPM…AIPP, and TIIM…HMFL.

The protein belongs to the complex I subunit 4 family.

Its subcellular location is the mitochondrion membrane. The enzyme catalyses a ubiquinone + NADH + 5 H(+)(in) = a ubiquinol + NAD(+) + 4 H(+)(out). Functionally, core subunit of the mitochondrial membrane respiratory chain NADH dehydrogenase (Complex I) that is believed to belong to the minimal assembly required for catalysis. Complex I functions in the transfer of electrons from NADH to the respiratory chain. The immediate electron acceptor for the enzyme is believed to be ubiquinone. This chain is NADH-ubiquinone oxidoreductase chain 4 (MT-ND4), found in Bothrops erythromelas (Caatinga lance head).